A 315-amino-acid polypeptide reads, in one-letter code: Methionyl-tRNA formyltransferase (315 aa).

113 to 116 (SILP) contributes to the (6S)-5,6,7,8-tetrahydrofolate binding site.

Belongs to the Fmt family.

It carries out the reaction L-methionyl-tRNA(fMet) + (6R)-10-formyltetrahydrofolate = N-formyl-L-methionyl-tRNA(fMet) + (6S)-5,6,7,8-tetrahydrofolate + H(+). Its function is as follows. Attaches a formyl group to the free amino group of methionyl-tRNA(fMet). The formyl group appears to play a dual role in the initiator identity of N-formylmethionyl-tRNA by promoting its recognition by IF2 and preventing the misappropriation of this tRNA by the elongation apparatus. The polypeptide is Methionyl-tRNA formyltransferase (Vibrio vulnificus (strain CMCP6)).